Here is a 360-residue protein sequence, read N- to C-terminus: G-protein coupled receptor 15 (360 aa).

The Extracellular portion of the chain corresponds to 1–33 (MDPEETSVYLDYYYATSPNPDIRETHSHVPYTS). The helical transmembrane segment at 34–54 (VFLPVFYTAVFLTGVLGNLVL) threads the bilayer. Residues 55–69 (MGALHFKPGSRRLID) lie on the Cytoplasmic side of the membrane. The helical transmembrane segment at 70 to 90 (IFIINLAASDFIFLVTLPLWV) threads the bilayer. Over 91–120 (DKEASLGLWRTGSFLCKGSSYMISVNMHCS) the chain is Extracellular. A helical transmembrane segment spans residues 121-141 (VFLLTCMSVDRYLAIVCPVVS). At 142-149 (RKFRRTDC) the chain is on the cytoplasmic side. Residues 150 to 170 (AYVVCASIWFISCLLGLPTLL) traverse the membrane as a helical segment. The Extracellular segment spans residues 171–192 (SRELTLIDDKPYCAEKKATPLK). The chain crosses the membrane as a helical span at residues 193–213 (LIWSLVALIFTFFVPLLSIVT). Residues 214 to 239 (CYCCIARKLCAHYQQSGKHNKKLKKS) are Cytoplasmic-facing. Residues 240–260 (IKIIFIVVAAFLVSWLPFNTF) form a helical membrane-spanning segment. The Extracellular segment spans residues 261–284 (KLLAIVSGLQQERYFPSAMLQLGM). Residues 285–305 (EVSGPLAFANSCVNPFIYYIF) traverse the membrane as a helical segment. Topologically, residues 306-360 (DSYIRRAIVHCLCPCLKNYDFGSSTETSDSHLTKALSTFIHAEDFTRRRKRSVSL) are cytoplasmic. The residue at position 359 (S359) is a Phosphoserine.

It belongs to the G-protein coupled receptor 1 family. As to quaternary structure, interacts with adapter YWHAE; this interaction promotes ER-to-Golgi transport of GPR15. Post-translationally, phosphorylation is necessary for YWHAE binding and efficient surface expression. In terms of processing, O-glycosylated. Sialylated O-glycans in the N-terminal tail inhibits binding of GPR15LG. Sulfation is required for efficient binding of GPR15LG.

Its subcellular location is the cell membrane. Functionally, g protein-coupled receptor that plays an important role in immune homeostasis. Acts via its natural ligand GPR15LG, a chemokine-like polypeptide strongly expressed in gastrointestinal tissues. GPR15-GPR15LG signaling axis regulates intestinal homeostasis and inflammation through the migration of immune cells. Controls thereby the specific homing of T-cells, particularly FOXP3+ regulatory T-cells (Tregs), to the large intestine lamina propria. Also required for skin localization of thymus-derived dendritic epidermal T-cells. Plays an important role in mediating cytoprotective function as well as angiogenesis of thrombomodulin. Mechanistically, preferentially signals through the Gi/o pathway to inhibit adenylate cyclase activity and activate a phosphatidylinositol-calcium second messenger system that regulates the release of Ca(2+) ions from intracellular stores. The sequence is that of G-protein coupled receptor 15 (GPR15) from Macaca mulatta (Rhesus macaque).